The sequence spans 337 residues: Vacuolar protein sorting-associated protein 26B (337 aa).

The disordered stretch occupies residues 311–337 (SQRFEGTSHPETRPQHSGAAAVEQEQE).

The protein belongs to the VPS26 family. Component of the heterotrimeric retromer cargo-selective complex (CSC) which is believed to associate with variable sorting nexins to form functionally distinct retromer complex variants.

It localises to the cytoplasm. The protein resides in the membrane. Its subcellular location is the endosome. Acts as a component of the retromer cargo-selective complex (CSC). The CSC is believed to be the core functional component of retromer or respective retromer complex variants acting to prevent missorting of selected transmembrane cargo proteins into the lysosomal degradation pathway. Retromer mediates retrograde transport of cargo proteins from endosomes to the trans-Golgi network (TGN). This Xenopus tropicalis (Western clawed frog) protein is Vacuolar protein sorting-associated protein 26B (vps26b).